The sequence spans 144 residues: Ribonuclease H (144 aa).

One can recognise an RNase H type-1 domain in the interval 1–141 (MKKVEIFTDG…ADRLASEAAD (141 aa)). Mg(2+) contacts are provided by aspartate 9, glutamate 47, aspartate 69, and aspartate 133.

The protein belongs to the RNase H family. In terms of assembly, monomer. Mg(2+) is required as a cofactor.

It is found in the cytoplasm. It catalyses the reaction Endonucleolytic cleavage to 5'-phosphomonoester.. In terms of biological role, endonuclease that specifically degrades the RNA of RNA-DNA hybrids. The sequence is that of Ribonuclease H from Erythrobacter litoralis (strain HTCC2594).